We begin with the raw amino-acid sequence, 341 residues long: 4-hydroxy-2-oxovalerate aldolase (341 aa).

Positions 9 to 259 (VRITEVCLRD…KLDIDLYKMM (251 aa)) constitute a Pyruvate carboxyltransferase domain. 17 to 18 (RD) provides a ligand contact to substrate. D18 contributes to the Mn(2+) binding site. The Proton acceptor role is filled by H21. Positions 171 and 198 each coordinate substrate. Residues H198 and H200 each contribute to the Mn(2+) site. Y289 is a substrate binding site.

Belongs to the 4-hydroxy-2-oxovalerate aldolase family.

The catalysed reaction is (S)-4-hydroxy-2-oxopentanoate = acetaldehyde + pyruvate. This Bacillus cereus (strain ATCC 10987 / NRS 248) protein is 4-hydroxy-2-oxovalerate aldolase.